Reading from the N-terminus, the 353-residue chain is Photosystem II D2 protein (353 aa).

Thr-2 bears the N-acetylthreonine mark. Thr-2 bears the Phosphothreonine mark. Residues 41–61 (TAYFALGGWFTGTTFVTSWYT) form a helical membrane-spanning segment. His-118 lines the chlorophyll a pocket. Residues 125–141 (GFMLRQFELARSVQLRP) traverse the membrane as a helical segment. The pheophytin a site is built by Gln-130 and Asn-143. The chain crosses the membrane as a helical span at residues 153 to 166 (VFVSVFLIYPLGQS). Residue His-198 participates in chlorophyll a binding. Residues 208–228 (AALLCAIHGATVENTLFEDGD) traverse the membrane as a helical segment. A plastoquinone-binding residues include His-215 and Phe-262. Residue His-215 participates in Fe cation binding. Residue His-269 participates in Fe cation binding. The chain crosses the membrane as a helical span at residues 279 to 295 (GLWMSAIGVVGLALNLR).

The protein belongs to the reaction center PufL/M/PsbA/D family. In terms of assembly, PSII is composed of 1 copy each of membrane proteins PsbA, PsbB, PsbC, PsbD, PsbE, PsbF, PsbH, PsbI, PsbJ, PsbK, PsbL, PsbM, PsbT, PsbX, PsbY, PsbZ, Psb30/Ycf12, at least 3 peripheral proteins of the oxygen-evolving complex and a large number of cofactors. It forms dimeric complexes. The D1/D2 heterodimer binds P680, chlorophylls that are the primary electron donor of PSII, and subsequent electron acceptors. It shares a non-heme iron and each subunit binds pheophytin, quinone, additional chlorophylls, carotenoids and lipids. There is also a Cl(-1) ion associated with D1 and D2, which is required for oxygen evolution. The PSII complex binds additional chlorophylls, carotenoids and specific lipids. is required as a cofactor.

It localises to the plastid. Its subcellular location is the chloroplast thylakoid membrane. The catalysed reaction is 2 a plastoquinone + 4 hnu + 2 H2O = 2 a plastoquinol + O2. In terms of biological role, photosystem II (PSII) is a light-driven water:plastoquinone oxidoreductase that uses light energy to abstract electrons from H(2)O, generating O(2) and a proton gradient subsequently used for ATP formation. It consists of a core antenna complex that captures photons, and an electron transfer chain that converts photonic excitation into a charge separation. The D1/D2 (PsbA/PsbD) reaction center heterodimer binds P680, the primary electron donor of PSII as well as several subsequent electron acceptors. D2 is needed for assembly of a stable PSII complex. The chain is Photosystem II D2 protein from Adiantum capillus-veneris (Maidenhair fern).